We begin with the raw amino-acid sequence, 251 residues long: Prothoracicostatic peptides (251 aa).

The tract at residues 1 to 22 (MRKSARGQVCTEAGAGASGDWQ) is disordered. Residues 1 to 77 (MRKSARGQVC…GWQDLNSAWG (77 aa)) constitute a propeptide that is removed on maturation. At W89 the chain carries Tryptophan amide. The propeptide occupies 93-138 (GWNDMSSAWGKRGWNDMSSAWGKRGWNDMSSAWGKRGWNDMSSAWG). Tryptophan amide is present on W152. Positions 156–187 (AAEPDYEEIDAAIEQLIPIQQLSDNERMEVPE) are excised as a propeptide. W198 and W228 each carry tryptophan amide. Residues 227–251 (MWGKRSAPDADAVDDDHESSARDEA) form a disordered region.

As to expression, prothoracicostatic peptide 5: Expressed in antennal lobe (AL), corpora cardiaca (CC), corpora allata (CA) and gnathal ganglion (GNG) (at protein level). Expression in AL detected in all animals, in CC, CA and GNG in most (at protein level). Prothoracicostatic peptide 6: Expressed in antennal lobe (AL), corpora cardiaca (CC), corpora allata (CA) and gnathal ganglion (GNG) (at protein level). Expression in AL detected in all animals, expression in GNG in most animals, in CA and CC detected in some animals (at protein level). Prothoracicostatic peptide 7: Expressed in antennal lobe (AL), corpora cardiaca (CC), corpora allata (CA) and gnathal ganglion (GNG) (at protein level). Expression in AL, CA and CC detected in most animals, expression in GNG in some animals (at protein level). Prothoracicostatic peptide precursor-related peptide 2: Expressed in antennal lobe (AL), corpora cardiaca (CC) and corpora allata (CA) with expression detected in few animals (at protein level). Not expressed in gnathal ganglion (GNG) (at protein level). Prothoracicostatic peptide 8: Expressed in antennal lobe (AL), corpora cardiaca (CC), corpora allata (CA) and gnathal ganglion (GNG) (at protein level). Expression in AL detected in all animals, expression in GNG in most animals, in CA and CC detected in some animals (at protein level). Prothoracicostatic peptide precursor-related peptide 3: Expressed in antennal lobe (AL) in few animals (at protein level). Not expressed in corpora cardiaca (CC), corpora allata (CA) and gnathal ganglion (GNG) (at protein level).

Its subcellular location is the secreted. This Agrotis ipsilon (Black cutworm moth) protein is Prothoracicostatic peptides.